The following is a 426-amino-acid chain: Serine--tRNA ligase (426 aa).

Residue 233 to 235 (TSE) coordinates L-serine. 264–266 (RAE) provides a ligand contact to ATP. Glutamate 287 serves as a coordination point for L-serine. 351 to 354 (EISS) is an ATP binding site. Residue serine 387 coordinates L-serine.

This sequence belongs to the class-II aminoacyl-tRNA synthetase family. Type-1 seryl-tRNA synthetase subfamily. As to quaternary structure, homodimer. The tRNA molecule binds across the dimer.

The protein resides in the cytoplasm. It carries out the reaction tRNA(Ser) + L-serine + ATP = L-seryl-tRNA(Ser) + AMP + diphosphate + H(+). The catalysed reaction is tRNA(Sec) + L-serine + ATP = L-seryl-tRNA(Sec) + AMP + diphosphate + H(+). Its pathway is aminoacyl-tRNA biosynthesis; selenocysteinyl-tRNA(Sec) biosynthesis; L-seryl-tRNA(Sec) from L-serine and tRNA(Sec): step 1/1. In terms of biological role, catalyzes the attachment of serine to tRNA(Ser). Is also able to aminoacylate tRNA(Sec) with serine, to form the misacylated tRNA L-seryl-tRNA(Sec), which will be further converted into selenocysteinyl-tRNA(Sec). The chain is Serine--tRNA ligase from Xanthomonas campestris pv. campestris (strain 8004).